The following is a 614-amino-acid chain: Interleukin-18 receptor accessory protein (614 aa).

The first 19 residues, 1–19 (MLCLGWVFLWFVAGEKTTG), serve as a signal peptide directing secretion. Over 20-356 (FNHSACATKK…RTIRLRKKEE (337 aa)) the chain is Extracellular. The N-linked (GlcNAc...) asparagine glycan is linked to asparagine 21. Cysteine 46 and cysteine 126 are joined by a disulfide. The tract at residues 59-78 (ASQLSPTQSPAHKPCSGSQK) is disordered. Ig-like C2-type domains follow at residues 148–234 (PQRN…WTVR) and 250–352 (PEIL…IRLR). The N-linked (GlcNAc...) asparagine glycan is linked to asparagine 151. Intrachain disulfides connect cysteine 154–cysteine 179, cysteine 174–cysteine 220, and cysteine 179–cysteine 220. Asparagine 227 is a glycosylation site (N-linked (GlcNAc...) asparagine). A disulfide bridge links cysteine 272 with cysteine 336. Asparagine 344 carries N-linked (GlcNAc...) asparagine glycosylation. The helical transmembrane segment at 357–377 (VVFVYILLGTALMLVGVLVAA) threads the bilayer. Residues 378–614 (AFLYWYWIEV…LLLYSDQKRC (237 aa)) lie on the Cytoplasmic side of the membrane. A TIR domain is found at 405 to 558 (KEFDAFVSYS…RFWTQIRYHM (154 aa)). Residue glutamate 492 is part of the active site.

This sequence belongs to the interleukin-1 receptor family. In terms of assembly, forms a ternary complex with IL18 and IL18R1. Within this complex, IL18R1 is involved in ligand-binding and IL18RAP in signaling leading to NF-kappa-B and JNK activation.

The protein resides in the cell membrane. It carries out the reaction NAD(+) + H2O = ADP-D-ribose + nicotinamide + H(+). Within the IL18 receptor complex, does not mediate IL18-binding, but involved in IL18-dependent signal transduction, leading to NF-kappa-B and JNK activation. May play a role in IL18-mediated IFNG synthesis from T-helper 1 (Th1) cells. In Mus musculus (Mouse), this protein is Interleukin-18 receptor accessory protein.